We begin with the raw amino-acid sequence, 476 residues long: Adenosylhomocysteinase (476 aa).

Substrate-binding residues include threonine 67, aspartate 142, and glutamate 202. NAD(+) is bound at residue 203–205 (TTT). Substrate contacts are provided by lysine 232 and aspartate 236. Residues asparagine 237, 266-271 (GYGDVG), glutamate 289, asparagine 324, 345-347 (IGH), and asparagine 390 contribute to the NAD(+) site.

This sequence belongs to the adenosylhomocysteinase family. It depends on NAD(+) as a cofactor.

Its subcellular location is the cytoplasm. It catalyses the reaction S-adenosyl-L-homocysteine + H2O = L-homocysteine + adenosine. It participates in amino-acid biosynthesis; L-homocysteine biosynthesis; L-homocysteine from S-adenosyl-L-homocysteine: step 1/1. May play a key role in the regulation of the intracellular concentration of adenosylhomocysteine. This is Adenosylhomocysteinase from Synechococcus sp. (strain WH7803).